Reading from the N-terminus, the 83-residue chain is MAENVPADVNTLSFELAIEELETIVKRLEDGKVALEESVAIYERGEALKRRCEELLRRAEARVEKITTDASGHVTGTEPLDVR.

It belongs to the XseB family. In terms of assembly, heterooligomer composed of large and small subunits.

Its subcellular location is the cytoplasm. It catalyses the reaction Exonucleolytic cleavage in either 5'- to 3'- or 3'- to 5'-direction to yield nucleoside 5'-phosphates.. Its function is as follows. Bidirectionally degrades single-stranded DNA into large acid-insoluble oligonucleotides, which are then degraded further into small acid-soluble oligonucleotides. This is Exodeoxyribonuclease 7 small subunit from Nitrobacter winogradskyi (strain ATCC 25391 / DSM 10237 / CIP 104748 / NCIMB 11846 / Nb-255).